A 345-amino-acid chain; its full sequence is UDP-3-O-acylglucosamine N-acyltransferase 3 (345 aa).

The active-site Proton acceptor is the H236.

Belongs to the transferase hexapeptide repeat family. LpxD subfamily. In terms of assembly, homotrimer.

It carries out the reaction a UDP-3-O-[(3R)-3-hydroxyacyl]-alpha-D-glucosamine + a (3R)-hydroxyacyl-[ACP] = a UDP-2-N,3-O-bis[(3R)-3-hydroxyacyl]-alpha-D-glucosamine + holo-[ACP] + H(+). It participates in bacterial outer membrane biogenesis; LPS lipid A biosynthesis. Functionally, catalyzes the N-acylation of UDP-3-O-acylglucosamine using 3-hydroxyacyl-ACP as the acyl donor. Is involved in the biosynthesis of lipid A, a phosphorylated glycolipid that anchors the lipopolysaccharide to the outer membrane of the cell. This Gloeobacter violaceus (strain ATCC 29082 / PCC 7421) protein is UDP-3-O-acylglucosamine N-acyltransferase 3.